Consider the following 52-residue polypeptide: Conotoxin Cal9.2b (52 aa).

Residues 1–6 (KKGVTL) constitute a propeptide that is removed on maturation. 3 cysteine pairs are disulfide-bonded: Cys14-Cys31, Cys19-Cys41, and Cys21-Cys46.

As to expression, expressed by the venom duct.

It is found in the secreted. In terms of biological role, probable neurotoxin with unknown target. Possibly targets ion channels. The chain is Conotoxin Cal9.2b from Californiconus californicus (California cone).